The sequence spans 372 residues: MKFIDEARIEVIAGDGGDGSASMRREKFVPFGGPDGGDGGRGGSVYVIADRNINTLIDYRYAKKHMARNGENGRGSDCYGKGGDDVTLRMPVGTVINDMDTGELIADLTEHDQKVLVAKGGAGGLGNLHFKSSTNRAPRQKTDGKPGERRMLKLELKVLADVGLLGMPNAGKSTFISSVSNAKPKIADYPFTTLAPNLGVVRVGPGKSFVIADIPGLIEGAAEGAGLGHQFLRHLQRTGLLLHLVDLAPFDESVDPVAEAKAIVGELRKYDESLYQKPRWLVLNKLDMVPEDERRTRVVDFIERFGWTGPVFEISALTGQGCEGLVYAIYDYLAEHSDAHRAELAEDLASDVRFRDASGAGGEPHEREADAP.

The Obg domain maps to 1–159 (MKFIDEARIE…RMLKLELKVL (159 aa)). Residues 128-147 (LHFKSSTNRAPRQKTDGKPG) are disordered. One can recognise an OBG-type G domain in the interval 160 to 334 (ADVGLLGMPN…LVYAIYDYLA (175 aa)). GTP contacts are provided by residues 166-173 (GMPNAGKS), 191-195 (FTTLA), 213-216 (DIPG), 284-287 (NKLD), and 315-317 (SAL). Mg(2+) contacts are provided by S173 and T193.

It belongs to the TRAFAC class OBG-HflX-like GTPase superfamily. OBG GTPase family. Monomer. It depends on Mg(2+) as a cofactor.

It localises to the cytoplasm. In terms of biological role, an essential GTPase which binds GTP, GDP and possibly (p)ppGpp with moderate affinity, with high nucleotide exchange rates and a fairly low GTP hydrolysis rate. Plays a role in control of the cell cycle, stress response, ribosome biogenesis and in those bacteria that undergo differentiation, in morphogenesis control. The sequence is that of GTPase Obg from Burkholderia thailandensis (strain ATCC 700388 / DSM 13276 / CCUG 48851 / CIP 106301 / E264).